Reading from the N-terminus, the 447-residue chain is Protein cereblon (447 aa).

Acidic residues-rich tracts occupy residues 1–10 (MADDEGEEDP) and 25–34 (ESEEEDEMEL). The tract at residues 1–47 (MADDEGEEDPGINNMGNLLQVISSESEEEDEMELEDAKTADSESPNI) is disordered. The Lon N-terminal domain occupies 82–322 (IPVLPHVQVM…CELDIMSKCT (241 aa)). A CULT domain is found at 321-429 (CTSLCCKHCP…LTRSALQPRI (109 aa)). Positions 326 and 329 each coordinate Zn(2+). (S)-thalidomide-binding residues include W383 and W389. Positions 394 and 397 each coordinate Zn(2+).

Belongs to the CRBN family. As to quaternary structure, component of a DCX (DDB1-CUL4-X-box) protein ligase complex.

The protein resides in the cytoplasm. The protein localises to the nucleus. It functions in the pathway protein modification; protein ubiquitination. In terms of biological role, substrate recognition component of a DCX (DDB1-CUL4-X-box) E3 protein ligase complex that mediates the ubiquitination and subsequent proteasomal degradation of target proteins, such as MEIS2. Normal degradation of key regulatory proteins is required for normal limb outgrowth and expression of the fibroblast growth factor FGF8. Maintains presynaptic glutamate release and consequently cognitive functions, such as memory and learning, by negatively regulating large-conductance calcium-activated potassium (BK) channels in excitatory neurons. Likely to function by regulating the assembly and neuronal surface expression of BK channels via its interaction with KCNT1. May also be involved in regulating anxiety-like behaviors via a BK channel-independent mechanism. The protein is Protein cereblon (crbn) of Xenopus tropicalis (Western clawed frog).